A 339-amino-acid chain; its full sequence is N-acetyl-gamma-glutamyl-phosphate reductase (339 aa).

Cys-145 is a catalytic residue.

This sequence belongs to the NAGSA dehydrogenase family. Type 1 subfamily.

The protein localises to the cytoplasm. It catalyses the reaction N-acetyl-L-glutamate 5-semialdehyde + phosphate + NADP(+) = N-acetyl-L-glutamyl 5-phosphate + NADPH + H(+). Its pathway is amino-acid biosynthesis; L-arginine biosynthesis; N(2)-acetyl-L-ornithine from L-glutamate: step 3/4. Its function is as follows. Catalyzes the NADPH-dependent reduction of N-acetyl-5-glutamyl phosphate to yield N-acetyl-L-glutamate 5-semialdehyde. The chain is N-acetyl-gamma-glutamyl-phosphate reductase from Thermotoga sp. (strain RQ2).